A 414-amino-acid chain; its full sequence is Arrestin domain-containing protein 3 (414 aa).

2 short sequence motifs (PPxY motif) span residues 346–349 (PPSY) and 391–394 (PPLY). Residues 393–414 (LYSEIDPNPDQSADDRPSCPSR) form a disordered region. The segment covering 405-414 (ADDRPSCPSR) has biased composition (basic and acidic residues).

Belongs to the arrestin family. Interacts (via PPxY motifs) with NEDD4 (via WW domains). Interacts with ADRB2. Interacts with ADRB3. Interacts with HGS (via PPxY motifs). Does not bind TXN (thioredoxin). Interacts with ITCH.

The protein localises to the cytoplasm. It is found in the cell membrane. Its subcellular location is the lysosome. It localises to the endosome. The protein resides in the early endosome. Adapter protein that plays a role in regulating cell-surface expression of adrenergic receptors and probably also other G protein-coupled receptors. Plays a role in NEDD4-mediated ubiquitination and endocytosis af activated ADRB2 and subsequent ADRB2 degradation. May recruit NEDD4 to ADRB2. Alternatively, may function as adapter protein that does not play a major role in recruiting NEDD4 to ADRB2, but rather plays a role in a targeting ADRB2 to endosomes. This Pongo abelii (Sumatran orangutan) protein is Arrestin domain-containing protein 3 (ARRDC3).